A 237-amino-acid chain; its full sequence is Leucyl/phenylalanyl-tRNA--protein transferase (237 aa).

Belongs to the L/F-transferase family.

Its subcellular location is the cytoplasm. It catalyses the reaction N-terminal L-lysyl-[protein] + L-leucyl-tRNA(Leu) = N-terminal L-leucyl-L-lysyl-[protein] + tRNA(Leu) + H(+). It carries out the reaction N-terminal L-arginyl-[protein] + L-leucyl-tRNA(Leu) = N-terminal L-leucyl-L-arginyl-[protein] + tRNA(Leu) + H(+). The enzyme catalyses L-phenylalanyl-tRNA(Phe) + an N-terminal L-alpha-aminoacyl-[protein] = an N-terminal L-phenylalanyl-L-alpha-aminoacyl-[protein] + tRNA(Phe). Functionally, functions in the N-end rule pathway of protein degradation where it conjugates Leu, Phe and, less efficiently, Met from aminoacyl-tRNAs to the N-termini of proteins containing an N-terminal arginine or lysine. This Shewanella baltica (strain OS185) protein is Leucyl/phenylalanyl-tRNA--protein transferase.